The chain runs to 216 residues: Somatotropin (216 aa).

The signal sequence occupies residues 1 to 26; the sequence is MAADPQSSVLLAFALLCLPWPQEVGA. H45 is a binding site for Zn(2+). C78 and C189 are joined by a disulfide. S131 bears the Phosphoserine mark. Zn(2+) is bound at residue E198. A disulfide bridge connects residues C206 and C214.

It belongs to the somatotropin/prolactin family.

It localises to the secreted. Functionally, plays an important role in growth control. Its major role in stimulating body growth is to stimulate the liver and other tissues to secrete IGF1. It stimulates both the differentiation and proliferation of myoblasts. It also stimulates amino acid uptake and protein synthesis in muscle and other tissues. In Ailuropoda melanoleuca (Giant panda), this protein is Somatotropin (GH1).